Consider the following 304-residue polypeptide: Oxygen-dependent coproporphyrinogen-III oxidase (304 aa).

Ser-94 serves as a coordination point for substrate. Residues His-98 and His-108 each contribute to the a divalent metal cation site. Catalysis depends on His-108, which acts as the Proton donor. 110–112 (NVR) contacts substrate. A divalent metal cation is bound by residues His-147 and His-177. Residues 242–277 (YVEFNLVYDRGTLFGLQTGGRTESILMSMPPLVRWE) form an important for dimerization region. Residue 260–262 (GGR) coordinates substrate.

It belongs to the aerobic coproporphyrinogen-III oxidase family. Homodimer. The cofactor is a divalent metal cation.

It localises to the cytoplasm. It carries out the reaction coproporphyrinogen III + O2 + 2 H(+) = protoporphyrinogen IX + 2 CO2 + 2 H2O. It functions in the pathway porphyrin-containing compound metabolism; protoporphyrin-IX biosynthesis; protoporphyrinogen-IX from coproporphyrinogen-III (O2 route): step 1/1. Involved in the heme biosynthesis. Catalyzes the aerobic oxidative decarboxylation of propionate groups of rings A and B of coproporphyrinogen-III to yield the vinyl groups in protoporphyrinogen-IX. The protein is Oxygen-dependent coproporphyrinogen-III oxidase of Shewanella pealeana (strain ATCC 700345 / ANG-SQ1).